Here is a 359-residue protein sequence, read N- to C-terminus: Bergaptol O-methyltransferase (359 aa).

Bergaptol is bound at residue His126. S-adenosyl-L-homocysteine-binding residues include Ser179, Gly203, Asp226, Asp246, and Lys260. His264 lines the bergaptol pocket. Catalysis depends on His264, which acts as the Proton acceptor.

Belongs to the class I-like SAM-binding methyltransferase superfamily. Cation-independent O-methyltransferase family. COMT subfamily. As to quaternary structure, homodimer. As to expression, mostly expressed in roots and, to a lower extent, in stems and leaves.

It localises to the cytoplasm. It catalyses the reaction bergaptol + S-adenosyl-L-methionine = bergapten + S-adenosyl-L-homocysteine. It functions in the pathway aromatic compound metabolism. The protein operates within secondary metabolite biosynthesis. In terms of biological role, O-methyltransferase involved in the biosynthesis of furocoumarins natural products such as bergapten, a photosensitizer used for medical purpose such as treating psoriasis and vitiligo or facilitating resistance to microbial infection and other stresses. Catalyzes specifically the methylation of bergaptol. Not active on xanthotol, isoscopoletin, scopoletin and esculetin. The sequence is that of Bergaptol O-methyltransferase from Kitagawia praeruptora (Peucedanum praeruptorum).